A 127-amino-acid chain; its full sequence is Lymphocyte antigen 6D (127 aa).

The signal sequence occupies residues 1 to 20 (MKTALLVLLVLAVATSPAWA). A UPAR/Ly6 domain is found at 21-108 (LRCHVCTNSA…AAPGHALLSS (88 aa)). 5 disulfides stabilise this stretch: Cys-23-Cys-45, Cys-26-Cys-32, Cys-38-Cys-63, Cys-67-Cys-86, and Cys-87-Cys-92. Residue Ser-98 is the site of GPI-anchor amidated serine attachment. A propeptide spans 99-127 (AAPGHALLSSVTLGLATSLSLLTVMALCL) (removed in mature form).

As to expression, lymphoid cells lacking Ly6d, called ALP (all-lymphoid progenitor), retain full lymphoid potential and early thymic seeding activity, whereas cells containing Ly6d, called BLP (B-cell-biased lymphoid progenitor), up-regulate the B-cell specifying factors Ebf1 and Pax5 and behave essentially as B-cell progenitors (at protein level). Thymocytes and B-cells.

Its subcellular location is the cell membrane. May act as a specification marker at earliest stage specification of lymphocytes between B- and T-cell development. Marks the earliest stage of B-cell specification. This is Lymphocyte antigen 6D (Ly6d) from Mus musculus (Mouse).